A 147-amino-acid polypeptide reads, in one-letter code: Small ribosomal subunit protein bS16 (147 aa).

The segment at 89–147 (AWTHGNNPKKAEPGKKAQERAKERADKAEAKAAAAAEAAAAPAEEAPAEAAPAEETSES) is disordered. Over residues 97–118 (KKAEPGKKAQERAKERADKAEA) the composition is skewed to basic and acidic residues. Residues 119-147 (KAAAAAEAAAAPAEEAPAEAAPAEETSES) are compositionally biased toward low complexity.

It belongs to the bacterial ribosomal protein bS16 family.

The sequence is that of Small ribosomal subunit protein bS16 from Hyphomonas neptunium (strain ATCC 15444).